We begin with the raw amino-acid sequence, 363 residues long: Probable aminomethyltransferase (363 aa).

It belongs to the GcvT family. In terms of assembly, the glycine cleavage system is composed of four proteins: P, T, L and H.

The catalysed reaction is N(6)-[(R)-S(8)-aminomethyldihydrolipoyl]-L-lysyl-[protein] + (6S)-5,6,7,8-tetrahydrofolate = N(6)-[(R)-dihydrolipoyl]-L-lysyl-[protein] + (6R)-5,10-methylene-5,6,7,8-tetrahydrofolate + NH4(+). The glycine cleavage system catalyzes the degradation of glycine. In Haloarcula marismortui (strain ATCC 43049 / DSM 3752 / JCM 8966 / VKM B-1809) (Halobacterium marismortui), this protein is Probable aminomethyltransferase.